The primary structure comprises 292 residues: Phosphatidylglycerol--prolipoprotein diacylglyceryl transferase (292 aa).

4 helical membrane-spanning segments follow: residues 7–27, 45–65, 83–103, and 116–136; these read IILS…FLRE, FQLR…YVLA, LFWG…IFNW, and IWHG…MIFI. A 1,2-diacyl-sn-glycero-3-phospho-(1'-sn-glycerol) is bound at residue R165. Helical transmembrane passes span 204-224 and 264-284; these read PTFL…YFFV and AAQV…AYII.

This sequence belongs to the Lgt family.

It is found in the cell inner membrane. The catalysed reaction is L-cysteinyl-[prolipoprotein] + a 1,2-diacyl-sn-glycero-3-phospho-(1'-sn-glycerol) = an S-1,2-diacyl-sn-glyceryl-L-cysteinyl-[prolipoprotein] + sn-glycerol 1-phosphate + H(+). The protein operates within protein modification; lipoprotein biosynthesis (diacylglyceryl transfer). Functionally, catalyzes the transfer of the diacylglyceryl group from phosphatidylglycerol to the sulfhydryl group of the N-terminal cysteine of a prolipoprotein, the first step in the formation of mature lipoproteins. The protein is Phosphatidylglycerol--prolipoprotein diacylglyceryl transferase of Fervidobacterium nodosum (strain ATCC 35602 / DSM 5306 / Rt17-B1).